Here is a 988-residue protein sequence, read N- to C-terminus: uncharacterized protein (988 aa).

A signal peptide spans 1-17 (MIRLVFLFLLVVLSVEL). The interval 111–176 (YQNPSTFPST…SKLNQKSSKS (66 aa)) is disordered. Residues 114–140 (PSTFPSTTTASTTTSTTTMPPTYQTTT) are compositionally biased toward low complexity. 4 N-linked (GlcNAc...) asparagine glycosylation sites follow: Asn-247, Asn-389, Asn-529, and Asn-601. Residues 690–710 (IMIFTIFSVLSALTCLMCMYL) form a helical membrane-spanning segment. A glycan (N-linked (GlcNAc...) asparagine) is linked at Asn-720. 6 helical membrane-spanning segments follow: residues 721–741 (LTAV…AFII), 753–773 (LLFP…TVLI), 784–804 (VLIA…WLLL), 832–852 (MILL…IFAL), 864–884 (LMIS…LPLI), and 891–911 (TVMA…SHTG). A disordered region spans residues 966-988 (RSEDTLRRNTSLYGTEGYELPTP). A glycan (N-linked (GlcNAc...) asparagine) is linked at Asn-974.

Its subcellular location is the membrane. This is an uncharacterized protein from Caenorhabditis elegans.